Reading from the N-terminus, the 636-residue chain is Polyadenylate-binding protein 1 (636 aa).

Position 1 is an N-acetylmethionine (methionine 1). 4 RRM domains span residues 11–89 (ASLY…WSQR), 99–175 (GNIF…RFKS), 191–268 (TNVY…RAQK), and 294–370 (VNLY…LAQR). The interval 166-289 (RKVFVGRFKS…FEQMKQDRIT (124 aa)) is UNR-binding. Residue lysine 299 is modified to N6-methyllysine. Serine 315 is subject to Phosphoserine. At threonine 319 the chain carries Phosphothreonine. Omega-N-methylarginine occurs at positions 385, 419, 432, and 436. Residues arginine 455 and arginine 460 each carry the omega-N-methylated arginine; by CARM1 modification. 2 positions are modified to omega-N-methylarginine: arginine 475 and arginine 481. Asymmetric dimethylarginine; alternate is present on arginine 493. A Dimethylated arginine; alternate modification is found at arginine 493. Arginine 493 is subject to Omega-N-methylarginine; alternate. Arginine 506 carries the post-translational modification Omega-N-methylarginine. The residue at position 512 (lysine 512) is an N6-acetyllysine. Arginine 518 bears the Omega-N-methylarginine mark. The 78-residue stretch at 542 to 619 (QEPLTASMLA…AVAVLQAHQA (78 aa)) folds into the PABC domain.

It belongs to the polyadenylate-binding protein type-1 family. May form homodimers. Component of a multisubunit autoregulatory ribonucleoprotein complex (ARC), at least composed of IGF2BP1, PABPC1 and CSDE1. Directly interacts with IGF2BP1. Part of a complex associated with the FOS mCRD domain and consisting of HNRPD, SYNCRIP, PAIP1 and CSDE1/UNR. Interacts with PAIP1 and PAIP2 (via the PABPC1-interacting motifs PAM1 and PAM2). Interacts with PAIP1 with a 1:1 stoichiometry and with PAIP2 with a 1:2 stoichiometry. The interaction with CSDE1 is direct and RNA-independent. Found in a mRNP complex with YBX2. Interacts with TENT2/GLD2. Identified in the spliceosome C complex. Identified in a mRNP complex, at least composed of DHX9, DDX3X, ELAVL1, HNRNPU, IGF2BP1, ILF3, PABPC1, PCBP2, PTBP2, STAU1, STAU2, SYNCRIP and YBX1. The interaction with DDX3X is direct and RNA-independent. This interaction increases in stressed cells and decreases during cell recovery. Identified in a IGF2BP1-dependent mRNP granule complex containing untranslated mRNAs. Interacts with NXF1/TAP. Interacts with PIWIL1. Interacts with AGO1, AGO2, GSPT1 and GSPT2. Interacts with LARP4B. Interacts (via the second and third RRM domains and the C-terminus) with PAIP2B (via central acidic portion and C-terminus). Forms a complex with LARP1 and SHFL. Interacts with LARP4. Interacts with ZFC3H1 in a RNase-sensitive manner. Interacts with TRIM71 (via NHL repeats) in an RNA-dependent manner. Interacts with TENT5C; the interaction has no effect on TENT5C poly(A) polymerase function. Interacts with G3BP1 and G3BP2. Interacts with ENDOV; the interaction is RNA-dependent and stimulates ENDOV activity. Interacts with UPF1; the interaction is RNA-dependent. Interacts with IGF2BP2 and IGF2BP3. May interact with SETX. Interacts with RBM46. Interacts with PAN3 isoform 1/Pan3L and isoform 3/Pan3S (via N-terminus); interaction with isoform 1 is less efficient than with isoform 3. In terms of processing, phosphorylated by MAPKAPK2. Post-translationally, methylated by CARM1. Arg-493 is dimethylated, probably to asymmetric dimethylarginine.

It localises to the cytoplasm. The protein resides in the stress granule. The protein localises to the nucleus. It is found in the cell projection. Its subcellular location is the lamellipodium. Binds the poly(A) tail of mRNA, including that of its own transcript, and regulates processes of mRNA metabolism such as pre-mRNA splicing and mRNA stability. Its function in translational initiation regulation can either be enhanced by PAIP1 or repressed by PAIP2. Can probably bind to cytoplasmic RNA sequences other than poly(A) in vivo. Binds to N6-methyladenosine (m6A)-containing mRNAs and contributes to MYC stability by binding to m6A-containing MYC mRNAs. Involved in translationally coupled mRNA turnover. Implicated with other RNA-binding proteins in the cytoplasmic deadenylation/translational and decay interplay of the FOS mRNA mediated by the major coding-region determinant of instability (mCRD) domain. Involved in regulation of nonsense-mediated decay (NMD) of mRNAs containing premature stop codons; for the recognition of premature termination codons (PTC) and initiation of NMD a competitive interaction between UPF1 and PABPC1 with the ribosome-bound release factors is proposed. By binding to long poly(A) tails, may protect them from uridylation by ZCCHC6/ZCCHC11 and hence contribute to mRNA stability. This chain is Polyadenylate-binding protein 1 (Pabpc1), found in Rattus norvegicus (Rat).